The chain runs to 187 residues: uncharacterized protein (187 aa).

A helical membrane pass occupies residues 8–28 (ITFFIILLICLICILLLLVVF). Residues 99-153 (PLENRRDMEAEEENQINEKQEPENAGETGQEEDDGLQKIHTSVTRTPSVVESQKR) form a disordered region. Over residues 137-149 (IHTSVTRTPSVVE) the composition is skewed to polar residues.

It localises to the membrane. This is an uncharacterized protein from Homo sapiens (Human).